A 314-amino-acid chain; its full sequence is Elongation factor Ts (314 aa).

The interval 82–85 is involved in Mg(2+) ion dislocation from EF-Tu; it reads TDFV.

It belongs to the EF-Ts family.

Its subcellular location is the cytoplasm. Associates with the EF-Tu.GDP complex and induces the exchange of GDP to GTP. It remains bound to the aminoacyl-tRNA.EF-Tu.GTP complex up to the GTP hydrolysis stage on the ribosome. The protein is Elongation factor Ts of Nostoc punctiforme (strain ATCC 29133 / PCC 73102).